Here is a 2432-residue protein sequence, read N- to C-terminus: uncharacterized protein (2432 aa).

It belongs to the IIV-6 261R/396L/443R family.

This is an uncharacterized protein from Invertebrate iridescent virus 6 (IIV-6).